The sequence spans 616 residues: Dihydroxy-acid dehydratase (616 aa).

Residue Asp-81 coordinates Mg(2+). Residue Cys-122 participates in [2Fe-2S] cluster binding. Mg(2+) is bound by residues Asp-123 and Lys-124. N6-carboxylysine is present on Lys-124. Cys-195 contributes to the [2Fe-2S] cluster binding site. Glu-491 is a binding site for Mg(2+). Ser-517 serves as the catalytic Proton acceptor.

The protein belongs to the IlvD/Edd family. Homodimer. It depends on [2Fe-2S] cluster as a cofactor. Mg(2+) serves as cofactor.

The catalysed reaction is (2R)-2,3-dihydroxy-3-methylbutanoate = 3-methyl-2-oxobutanoate + H2O. It catalyses the reaction (2R,3R)-2,3-dihydroxy-3-methylpentanoate = (S)-3-methyl-2-oxopentanoate + H2O. It functions in the pathway amino-acid biosynthesis; L-isoleucine biosynthesis; L-isoleucine from 2-oxobutanoate: step 3/4. Its pathway is amino-acid biosynthesis; L-valine biosynthesis; L-valine from pyruvate: step 3/4. Functionally, functions in the biosynthesis of branched-chain amino acids. Catalyzes the dehydration of (2R,3R)-2,3-dihydroxy-3-methylpentanoate (2,3-dihydroxy-3-methylvalerate) into 2-oxo-3-methylpentanoate (2-oxo-3-methylvalerate) and of (2R)-2,3-dihydroxy-3-methylbutanoate (2,3-dihydroxyisovalerate) into 2-oxo-3-methylbutanoate (2-oxoisovalerate), the penultimate precursor to L-isoleucine and L-valine, respectively. The chain is Dihydroxy-acid dehydratase from Escherichia fergusonii (strain ATCC 35469 / DSM 13698 / CCUG 18766 / IAM 14443 / JCM 21226 / LMG 7866 / NBRC 102419 / NCTC 12128 / CDC 0568-73).